We begin with the raw amino-acid sequence, 1641 residues long: MATDGASCEPDFSRAPEDAAGAPAEAAKKEFDVDTLSKSELRMLLSVMEGELEARDLVIEALRARRKEVFIQERYGRFNLNDPFLALQRDYEAGASDKEKKPVCTNPLSILEAVMAHCRKMQERMSTQLAAAESRQKKLEMEKLQLQALEQEHKKLAARLEEERGKNKHVVLMLVKECKQLSGKVLEEAQKLEEVMAKLEEEKKKTSALEEELATEKRRSAEMEAQMEKQLSEFDTEREQLRAKLHREEAHTTDLKEEIDKMKKMIEQLKRGNDSKPSLSLPRKTKDRRLVSISVATEGPMTRSVACQTDLVTETAEPLKKLPLTVPVKPAAGSPLVSASAKGNACASAASVRPGIERQVSHGDLIGSSLPTVPPPSTDRIEENGPSTGSTPDLTSSPTALPSTVSPASGHTPTPPPHSLHSPCANAPLHPGLNPRIQAARFRFQGSNANDPDQNGNTTQSPPSRDVSPTSRDTLVAKQLARNTVTQALSRFTSPPAGAPPRPGAPPTGDVGTYPPVGRTSLKTPGGARVDRGNPPPIPPKKPGLSQTPSPPHPQLKVIMDSSRASSTGIKADNKTVASSPSSLPQGNRVINEENLSKSSSPQLPPKPSIDLTVAPAGCAVSALATSQVGAWPAETPGLNQPACSESSLVIPTTTAFRSSINPVSASSRRAGASDSLLVTASGWSPSLTPLLMSGGPAPLAGRPTLLQQAAAQGNVTLLSMLLNEEGLDINYSCEDGHSALYSAAKNGHTDCVRLLLNAEAQVNAADKNGFTPLCAAAAQGHFKCVELLIAYDANINHAADGGQTPLYLACKNGNKECIKLLLEAGTDRSVKTRDGWTPIHAAVDTGNVDSLKLLMYHGAPAHGNKLQEEPGLAIFDLDQEEHHEGTSKPVVPADLINHADSEGWTAAHIAASKGFKNCLEVLCRHGGLEPERRDKCNRTAHDVATDDCKHLLENLNALKIPLRISVGEIEPGNYGADDFECENTICALNIRKQTSWDDFSKAVSQALTNHFQAISSDGWWSLEDMTFNSTTDSSIGLSASSVRSITLGSVPWSAGQSFTQSPWDFMRTNKAEQVTVLLSGPQEGCLSSVTYASMIPLQMLQNYLRLVEQYHNVIFHGPEGSLQDYIAHQLALCLKHRQMAAGFPCEIVRAEVDADFSKEQLVDLFISSACLIPVKQSPANKKIIIILENLEKSSLSELLGDFLGPLENHSTESPCTFQKGNGMSECYYFHENCFLMGTIAKACLQGSDLLVQQHFRWVQLRWDSEPMQGLLQRFLRRKVVNKFRGQVPSPCDPVCKTVDWALAVWRQLNSCLARLGTPEALLGPKYFLSCPVIPGHAQATVKWMSKLWNAVIAPRVQEAILSRASVKRQPGLGQTTKNPSQGQQAVVRAALSILLNKAVLHGCPLQRAELDQHTADFKGGSFPLSIVSSYSSCSKKRESGAWRKVSTSPRKKSGRFSSPTWNKPDLSEEGIKSNTILQLNCNRNASLSNQKSLENDLSLTLNLDQRLSLGSDDEADLVKELQSMCSSKSESDISKIADSRDDLRRFDSSGNNPVFSATVNNPRMPVSQKEVSPLSSHQMTERSNSKSKTESGVSRVKSFLPVPRSKVTQCSQNTKRSSSSSNTRQIEINNNSRDLEPTQK.

The segment at 1–27 is disordered; that stretch reads MATDGASCEPDFSRAPEDAAGAPAEAA. Residues 119 to 276 are a coiled coil; that stretch reads RKMQERMSTQ…EQLKRGNDSK (158 aa). 3 disordered regions span residues 361–433, 446–472, and 488–588; these read SHGD…HPGL, GSNA…PTSR, and ALSR…PQGN. Over residues 385–405 the composition is skewed to polar residues; it reads GPSTGSTPDLTSSPTALPSTV. Asymmetric dimethylarginine is present on arginine 491. Residues 497-506 show a composition bias toward pro residues; sequence AGAPPRPGAP. Residues 576–586 are compositionally biased toward polar residues; the sequence is TVASSPSSLPQ. ANK repeat units follow at residues 702-732, 736-765, 769-798, 802-831, 835-864, and 903-933; these read GRPT…DINY, DGHS…QVNA, NGFT…NINH, GGQT…DRSV, DGWT…PAHG, and EGWT…EPER. Residues 1442–1468 form a disordered region; sequence AWRKVSTSPRKKSGRFSSPTWNKPDLS. Serine 1512 carries the phosphoserine modification. The segment at 1544 to 1641 is disordered; that stretch reads LRRFDSSGNN…NSRDLEPTQK (98 aa). Composition is skewed to polar residues over residues 1551 to 1562 and 1570 to 1579; these read GNNPVFSATVNN and KEVSPLSSHQ. The span at 1580–1590 shows a compositional bias: basic and acidic residues; it reads MTERSNSKSKT. Residues 1612 to 1626 show a composition bias toward low complexity; sequence SQNTKRSSSSSNTRQ.

Interacts with CTTN/cortactin SH3 domain. Interacts with STRN, STRN4/zinedin and MOB4/phocein; this interactions mediate the association with the STRIPAK core complex and may regulate dendritic spine distribution of the STRIPAK complex in hippocampal neurons. Activation of glutamate receptors weakens the interaction with STRN and STRN4.

The protein resides in the cytoplasm. It is found in the cell cortex. The protein localises to the cell projection. Its subcellular location is the dendritic spine. Its function is as follows. Regulates the dendritic spine distribution of CTTN/cortactin in hippocampal neurons, and thus controls dendritic spinogenesis and dendritic spine maintenance. Associates with the striatin-interacting phosphatase and kinase (STRIPAK) core complex to regulate dendritic spine distribution of the STRIPAK complex in hippocampal neurons. The protein is Cortactin-binding protein 2 (CTTNBP2) of Ovis aries (Sheep).